A 484-amino-acid polypeptide reads, in one-letter code: Transcription factor MYB88 (484 aa).

The tract at residues Met-1–Ser-20 is disordered. Residues Lys-13 to Ser-20 carry the Nuclear localization signal motif. HTH myb-type domains lie at Lys-25–Leu-76 and Asn-77–Ala-131. DNA-binding regions (H-T-H motif) lie at residues Trp-53–Leu-76 and Trp-104–Cys-127. 3 disordered regions span residues Asn-215 to Asn-241, Arg-321 to Leu-383, and Gly-458 to Leu-484. The span at Lys-232–Asn-241 shows a compositional bias: basic and acidic residues. Residues Ser-339 to Gly-348 are compositionally biased toward low complexity. The segment covering Thr-354–Gly-380 has biased composition (polar residues). Pro residues predominate over residues Ser-463–Cys-476.

Interacts with RBR1. Expressed at low levels in all organs including roots, leaves, hypocotyls stems, flowers, siliques and buds.

It localises to the nucleus. In terms of biological role, transcription factor that binds to DNA in promoters cis-regulatory element 5'-GGCGCGC-3' of cell cycle genes, including cyclins, cyclin-dependent kinases (CDKs), and components of the pre-replication complex. Binds to DNA in promoters cis-regulatory element 5'-AGCCG-3' of auxin regulated genes (e.g. PIN3 and PIN7). Together with FAMA and MYB124, ensures that stomata contain just two guard cells (GCs) by enforcing a single symmetric precursor cell division before stomatal maturity. Represses the expression of the mitosis-inducing factors CDKB1-1 and CDKA-1, specifically required for the last guard mother cells (GMC) symmetric divisions in the stomatal pathway. Represses CYCA2-3 in newly formed guard cells. Together with MYB88, regulates stomata spacing by restricting divisions late in the stomatal cell lineage thus limiting the number of GMC divisions. In collaboration with CDKB1-1 and CDKB1-2, restrict the G1/S transition and chloroplast and nuclear number during stomatal formation, and normally maintain fate and developmental progression throughout the stomatal cell lineage. Involved in sensing and/or transducing abiotic stress (e.g. drought and salt), probably via the positive regulation of NAC019. Regulates female reproduction being required for entry into megasporogenesis, probably via the regulation of cell cycle genes. Plays a minor role in lateral roots (LRs) initiation. Involved complementarily in establishing the gravitropic set-point angles of lateral roots by regulating the transcription of PIN3 and PIN7 in gravity-sensing cells of primary and lateral roots. The chain is Transcription factor MYB88 from Arabidopsis thaliana (Mouse-ear cress).